The primary structure comprises 104 residues: Large ribosomal subunit protein bL21 (104 aa).

Belongs to the bacterial ribosomal protein bL21 family. Part of the 50S ribosomal subunit. Contacts protein L20.

This protein binds to 23S rRNA in the presence of protein L20. This chain is Large ribosomal subunit protein bL21, found in Acidiphilium cryptum (strain JF-5).